The primary structure comprises 223 residues: RNA-free ribonuclease P (223 aa).

The protein belongs to the HARP family.

It catalyses the reaction Endonucleolytic cleavage of RNA, removing 5'-extranucleotides from tRNA precursor.. Its function is as follows. RNA-free RNase P that catalyzes the removal of the 5'-leader sequence from pre-tRNA to produce the mature 5'-terminus. The sequence is that of RNA-free ribonuclease P from Methanococcus maripaludis (strain C5 / ATCC BAA-1333).